A 317-amino-acid chain; its full sequence is UV DNA damage endonuclease (317 aa).

Belongs to the uve1/UvsE family.

Its function is as follows. Component in a DNA repair pathway. Removal of UV LIGHT damaged nucleotides. Recognizes pyrimidine dimers and cleave a phosphodiester bond immediately 5' to the lesion. The chain is UV DNA damage endonuclease from Bacillus cereus (strain ATCC 10987 / NRS 248).